The chain runs to 234 residues: tRNA (guanine-N(1)-)-methyltransferase (234 aa).

S-adenosyl-L-methionine-binding positions include Gly115 and 135–140; that span reads VGDYIL.

Belongs to the RNA methyltransferase TrmD family. As to quaternary structure, homodimer.

The protein resides in the cytoplasm. The enzyme catalyses guanosine(37) in tRNA + S-adenosyl-L-methionine = N(1)-methylguanosine(37) in tRNA + S-adenosyl-L-homocysteine + H(+). In terms of biological role, specifically methylates guanosine-37 in various tRNAs. In Rickettsia africae (strain ESF-5), this protein is tRNA (guanine-N(1)-)-methyltransferase.